We begin with the raw amino-acid sequence, 174 residues long: Inactive signal peptidase IA (174 aa).

Over 1–7 (MKKVVKY) the chain is Cytoplasmic. Residues 8 to 28 (LISLILAIIIVLFVQTFVIVG) traverse the membrane as a helical segment. The Extracellular portion of the chain corresponds to 29–174 (HVIPNNDMSP…FSKWTIQFKS (146 aa)).

This sequence belongs to the peptidase S26 family.

It is found in the cell membrane. In terms of biological role, catalytically inactive. This chain is Inactive signal peptidase IA (spsA), found in Staphylococcus aureus (strain MRSA252).